Reading from the N-terminus, the 243-residue chain is Amphiregulin (243 aa).

The signal sequence occupies residues 1–24 (MRTPSLSLALSVLSLLVLGSGHYA). Residues 25–96 (AGLELNGTSS…IVDDSVRVEQ (72 aa)) constitute a propeptide that is removed on maturation. The N-linked (GlcNAc...) asparagine glycan is linked to Asn30. Residues 55 to 67 (STISEMPSGSELS) show a composition bias toward polar residues. Disordered regions lie at residues 55–75 (STIS…DYSE) and 98–135 (IKPK…KKKN). Basic and acidic residues predominate over residues 98–113 (IKPKENKTEGEKSSEK). Asn103 carries an N-linked (GlcNAc...) asparagine glycan. Basic residues predominate over residues 114 to 135 (PKRKKKGGKGGKGRRNRKKKKN). The 41-residue stretch at 133–173 (KKNPCAAKFQNFCIHGECRYIENLEVVTCHCHQDYFGERCG) folds into the EGF-like domain. 3 cysteine pairs are disulfide-bonded: Cys137–Cys150, Cys145–Cys161, and Cys163–Cys172. The chain crosses the membrane as a helical span at residues 190–213 (IALAAIIVFVSAVSVAAIGIITAV). Residue Asn236 is glycosylated (N-linked (GlcNAc...) asparagine).

Belongs to the amphiregulin family. In terms of assembly, the immature precursor interacts with CNIH.

The protein resides in the membrane. Ligand of the EGF receptor/EGFR. Autocrine growth factor as well as a mitogen for a broad range of target cells including astrocytes, Schwann cells and fibroblasts. The protein is Amphiregulin (Areg) of Rattus norvegicus (Rat).